A 102-amino-acid polypeptide reads, in one-letter code: Acid shock protein (102 aa).

The signal sequence occupies residues 1 to 21; sequence MKKVLGLVVAAAMGLSSAAFA. Residues 22 to 41 show a composition bias toward low complexity; sequence AETATTPAPTATTTKAAPAK. Positions 22 to 58 are excised as a propeptide; that stretch reads AETATTPAPTATTTKAAPAKTTHHKKQHKAAPAQKAQ. Residues 22-102 are disordered; it reads AETATTPAPT…PAKPAAQPAA (81 aa). Basic residues predominate over residues 80-90; the sequence is AAKKHAGKHSH. Residues 91–102 are compositionally biased toward low complexity; the sequence is QQPAKPAAQPAA.

Belongs to the Asr family. In terms of processing, proteolytic processing gives rise to the active protein.

The protein resides in the periplasm. Its function is as follows. Required for growth and/or survival at acidic conditions. This chain is Acid shock protein, found in Escherichia coli (strain SE11).